Consider the following 71-residue polypeptide: DNA-directed RNA polymerase subunit epsilon (71 aa).

It belongs to the RNA polymerase subunit epsilon family. As to quaternary structure, RNAP is composed of a core of 2 alpha, a beta and a beta' subunit. The core is associated with a delta subunit, and at least one of epsilon or omega. When a sigma factor is associated with the core the holoenzyme is formed, which can initiate transcription.

It catalyses the reaction RNA(n) + a ribonucleoside 5'-triphosphate = RNA(n+1) + diphosphate. Its function is as follows. A non-essential component of RNA polymerase (RNAP). In Anoxybacillus flavithermus (strain DSM 21510 / WK1), this protein is DNA-directed RNA polymerase subunit epsilon.